A 326-amino-acid chain; its full sequence is Phospho-N-acetylmuramoyl-pentapeptide-transferase (326 aa).

10 helical membrane-spanning segments follow: residues 5–25 (GLLI…PIFI), 51–71 (TPTM…LIMA), 82–102 (VWLL…DDFI), 122–142 (IIIA…TVIY), 148–168 (LQFD…VGAS), 180–200 (LLAG…WYGI), 204–224 (VVAV…VFNA), 229–249 (VFMG…ISIL), 252–272 (LEIL…SVII), and 304–324 (VVTT…YIEV).

It belongs to the glycosyltransferase 4 family. MraY subfamily. The cofactor is Mg(2+).

The protein resides in the cell membrane. It carries out the reaction UDP-N-acetyl-alpha-D-muramoyl-L-alanyl-gamma-D-glutamyl-meso-2,6-diaminopimeloyl-D-alanyl-D-alanine + di-trans,octa-cis-undecaprenyl phosphate = di-trans,octa-cis-undecaprenyl diphospho-N-acetyl-alpha-D-muramoyl-L-alanyl-D-glutamyl-meso-2,6-diaminopimeloyl-D-alanyl-D-alanine + UMP. The protein operates within cell wall biogenesis; peptidoglycan biosynthesis. Functionally, catalyzes the initial step of the lipid cycle reactions in the biosynthesis of the cell wall peptidoglycan: transfers peptidoglycan precursor phospho-MurNAc-pentapeptide from UDP-MurNAc-pentapeptide onto the lipid carrier undecaprenyl phosphate, yielding undecaprenyl-pyrophosphoryl-MurNAc-pentapeptide, known as lipid I. The sequence is that of Phospho-N-acetylmuramoyl-pentapeptide-transferase from Oceanobacillus iheyensis (strain DSM 14371 / CIP 107618 / JCM 11309 / KCTC 3954 / HTE831).